Here is a 966-residue protein sequence, read N- to C-terminus: Next to BRCA1 gene 1 protein (966 aa).

In terms of domain architecture, PB1 spans 4–85; that stretch reads QVTLNVTFKN…NQLQMQVHEG (82 aa). Phosphoserine is present on serine 116. A ZZ-type zinc finger spans residues 212–264; sequence SWHIACNNCQRRIVGVRYQCSLCPSYNICEDCEAGPYGHDTNHVLLKLRRPVV. The Zn(2+) site is built by cysteine 217, cysteine 220, cysteine 231, cysteine 234, cysteine 240, cysteine 243, histidine 250, and histidine 254. The ATG8 family protein-binding stretch occupies residues 542 to 636; the sequence is ASERELYIPS…KRKAENIASV (95 aa). Threonine 586 bears the Phosphothreonine; by GSK3-alpha mark. 3 positions are modified to phosphoserine: serine 590, serine 596, and serine 625. Acidic residues predominate over residues 699-718; the sequence is EAVMEEEEDEEDEEEEDELK. Disordered stretches follow at residues 699–728, 750–792, and 848–879; these read EAVM…SSAS, MYSS…QPQE, and VPDQ…HHGS. The ATG8 family protein-binding stretch occupies residues 727–738; the sequence is ASSEDYIIILPE. Residues 913 to 957 enclose the UBA domain; it reads SEDQTAALMAHLFEMGFCDRQLNLRLLKKHNYNILQVVTELLQLN.

As to quaternary structure, homooligomer and heterooligomer. Interacts with TRIM55. Interacts with titin/TTN. Interacts with RNF29, USP8, MAP1LC3A, MAP1LC3B, MAP1LC3C, GABARAP, GABARAPL1 and GABARAPL2. Binds to ubiquitin and ubiquitinated proteins. Interacts with SQSTM1. Interacts with TAX1BP1. Interacts with IRF3; this interaction mediates autophagic degradation of IRF3. Interacts with IL12A and IL12B. In terms of assembly, (Microbial infection) Interacts with Influenza A virus protein PB1; this interaction promotes NBR1-mediated selective autophagic degradation of MAVS. Post-translationally, (Microbial infection) Cleaved by S.pyogenes SpeB protease; leading to its degradation. Degradation by SpeB prevents autophagy, promoting to S.pyogenes intracellular replication. Phosphorylated by GSK3A; this phosphorylation inhibits NBR1 involvement in the formation of ubiquitinated protein aggregates.

The protein localises to the cytoplasm. It localises to the cytoplasmic vesicle. Its subcellular location is the autophagosome. The protein resides in the lysosome. It is found in the myofibril. The protein localises to the sarcomere. It localises to the m line. In terms of biological role, ubiquitin-binding autophagy adapter that participates in different processes including host defense or intracellular homeostasis. Possesses a double function during the selective autophagy by acting as a shuttle bringing ubiquitinated proteins to autophagosomes and also by participating in the formation of protein aggregates. Plays a role in the regulation of the innate immune response by modulating type I interferon production and targeting ubiquitinated IRF3 for autophagic degradation. In response to oxidative stress, promotes an increase in SQSTM1 levels, phosphorylation, and body formation by preventing its autophagic degradation. In turn, activates the KEAP1-NRF2/NFE2L2 antioxidant pathway. Also plays non-autophagy role by mediating the shuttle of IL-12 to late endosome for subsequent secretion. This chain is Next to BRCA1 gene 1 protein (NBR1), found in Homo sapiens (Human).